The following is a 505-amino-acid chain: MEEIQRYLQLDRSQQPSFLYPLIFQEYIYALAHGHNLNRAILLENPGYDNKSSFLIVKRLITRMYQQNHFLTSANDSSQNPFIGRNKNLYSKMISEGFSFIVEIPFSMRLISSEERKGIFQSHNLRSIHSIFPFLEDNFSHFNLMLDIQIPHPVHLEILVQTLRYWVKDAPSLHLLRFFLREYCNCNKIISTKKPGFLFLTKKNQRLFFLLYNFYVCEYESIFVFLHTQSSHLRPTSFGVFRERIYFYGKIEHFAEVFAKDFPTNLCLFKYPFMHYVRYQGKSILLSRGTALLMNKWKSYLVNFWQCNFDLWVHSRRAYIKQVYNYSLDFMGYLSIVRQTPLTVRSQMLKNAFLIKNPINKLDTLVPIIPLIGSFAKAKFCNLLGHPISKPVRTDLSDSDIMDRFGRICRNLSHYYSGSSKKKSLYRIKYILRLSCAKTLARKHKSTVRAFLKRLGSEFLEEFFMSEEEVFSLTFPRVYSLFLGVYRSRIWYLDITCINDLANQQ.

Belongs to the intron maturase 2 family. MatK subfamily.

The protein resides in the plastid. The protein localises to the chloroplast. In terms of biological role, usually encoded in the trnK tRNA gene intron. Probably assists in splicing its own and other chloroplast group II introns. The sequence is that of Maturase K from Apocynum androsaemifolium (Spreading dogbane).